The chain runs to 307 residues: Ribonuclease Z (307 aa).

7 residues coordinate Zn(2+): H61, H63, D65, H66, H138, D208, and H264. D65 functions as the Proton acceptor in the catalytic mechanism.

The protein belongs to the RNase Z family. As to quaternary structure, homodimer. Zn(2+) serves as cofactor.

The catalysed reaction is Endonucleolytic cleavage of RNA, removing extra 3' nucleotides from tRNA precursor, generating 3' termini of tRNAs. A 3'-hydroxy group is left at the tRNA terminus and a 5'-phosphoryl group is left at the trailer molecule.. Its function is as follows. Zinc phosphodiesterase, which displays some tRNA 3'-processing endonuclease activity. Probably involved in tRNA maturation, by removing a 3'-trailer from precursor tRNA. Also shows activity toward a broad range of substrates, such as intron containing pre-tRNAs, 5' extended precursors and non-RNA substrates. The protein is Ribonuclease Z of Pyrococcus furiosus (strain ATCC 43587 / DSM 3638 / JCM 8422 / Vc1).